Consider the following 384-residue polypeptide: 1-deoxy-D-xylulose 5-phosphate reductoisomerase (384 aa).

NADPH-binding residues include Thr10, Gly11, Ser12, Ile13, Gly36, and Asn123. Lys124 serves as a coordination point for 1-deoxy-D-xylulose 5-phosphate. Glu125 is a binding site for NADPH. Residue Asp149 coordinates Mn(2+). 1-deoxy-D-xylulose 5-phosphate is bound by residues Ser150, Glu151, Ser175, and His198. Glu151 lines the Mn(2+) pocket. Gly204 contacts NADPH. Ser211, Asn216, Lys217, and Glu220 together coordinate 1-deoxy-D-xylulose 5-phosphate. Glu220 contacts Mn(2+).

This sequence belongs to the DXR family. Mg(2+) serves as cofactor. Requires Mn(2+) as cofactor.

It catalyses the reaction 2-C-methyl-D-erythritol 4-phosphate + NADP(+) = 1-deoxy-D-xylulose 5-phosphate + NADPH + H(+). It participates in isoprenoid biosynthesis; isopentenyl diphosphate biosynthesis via DXP pathway; isopentenyl diphosphate from 1-deoxy-D-xylulose 5-phosphate: step 1/6. Functionally, catalyzes the NADPH-dependent rearrangement and reduction of 1-deoxy-D-xylulose-5-phosphate (DXP) to 2-C-methyl-D-erythritol 4-phosphate (MEP). This Chlorobium phaeovibrioides (strain DSM 265 / 1930) (Prosthecochloris vibrioformis (strain DSM 265)) protein is 1-deoxy-D-xylulose 5-phosphate reductoisomerase.